Here is an 88-residue protein sequence, read N- to C-terminus: Period circadian protein (88 aa).

The segment at Val-23 to Lys-88 is disordered. A run of 16 repeats spans residues Gly-30–Thr-31, Gly-33–Thr-34, Gly-35–Thr-36, Gly-37–Thr-38, Gly-39–Thr-40, Gly-41–Thr-42, Gly-43–Thr-44, Gly-45–Thr-46, Gly-47–Thr-48, Gly-49–Thr-50, Gly-51–Thr-52, Gly-53–Thr-54, Gly-55–Thr-56, Gly-57–Thr-58, Gly-59–Thr-60, and Gly-61–Asn-62. Positions Gly-30–Asn-62 are 16 X 2 AA tandem repeats of G-[TN]. Over residues Gly-30 to Asn-62 the composition is skewed to gly residues. The segment covering Val-79–Lys-88 has biased composition (polar residues).

Forms a heterodimer with timeless (TIM); the complex then translocates into the nucleus. Post-translationally, phosphorylated with a circadian rhythmicity, probably by the double-time protein (dbt). Phosphorylation could be implicated in the stability of per monomer and in the formation of heterodimer per-tim.

The protein resides in the nucleus. It is found in the cytoplasm. Its subcellular location is the perinuclear region. Functionally, essential for biological clock functions. Determines the period length of circadian and ultradian rhythms; an increase in PER dosage leads to shortened circadian rhythms and a decrease leads to lengthened circadian rhythms. Essential for the circadian rhythmicity of locomotor activity, eclosion behavior, and for the rhythmic component of the male courtship song that originates in the thoracic nervous system. The biological cycle depends on the rhythmic formation and nuclear localization of the TIM-PER complex. Light induces the degradation of TIM, which promotes elimination of PER. Nuclear activity of the heterodimer coordinatively regulates PER and TIM transcription through a negative feedback loop. Behaves as a negative element in circadian transcriptional loop. Does not appear to bind DNA, suggesting indirect transcriptional inhibition. This Drosophila teissieri (Fruit fly) protein is Period circadian protein (per).